The chain runs to 446 residues: MDKLKVGLISLGCDKNRVDSEIILGNVKSAYEIVTDPKLADFIIINTCGFIESAKQESIDTILEMSQYKGKYNCRGIVVTGCLAQRYGIELMELLPEIDIMLGVNDYDKLVENINNFISDKQNKIHNCGYSDLNINEGKRILTTKSHTAYLRIAEGCDNYCTYCIIPKIRGKYRSRSIENILQECNELSLRGVKEVILIAQDTTRYGIDLYNKKMLPELMRSISKIEGIEWIRLLYCYPEEITEDIIDEIALNDKVCNYIDIPLQHISDNILKLMGRRGRKKDILRNINELRKKINDISIRTTIIVGFPGESEEDFKELKNFIENIKFDNLGVFKYSREEGTRAYKMKDQVSEELKTAREGELMMLQKHIIYSMQKYKIGNKYKVLVEGKKEGVWYGRNYAMAPDIDGVIYIKSKKELKVGTMIDVKITNSVEYDLVGVVYDESGK.

The MTTase N-terminal domain maps to 4 to 119 (LKVGLISLGC…LVENINNFIS (116 aa)). 6 residues coordinate [4Fe-4S] cluster: C13, C48, C82, C157, C161, and C164. The region spanning 143–373 (TTKSHTAYLR…MMLQKHIIYS (231 aa)) is the Radical SAM core domain. In terms of domain architecture, TRAM spans 376–442 (KYKIGNKYKV…EYDLVGVVYD (67 aa)).

This sequence belongs to the methylthiotransferase family. RimO subfamily. [4Fe-4S] cluster is required as a cofactor.

It localises to the cytoplasm. It catalyses the reaction L-aspartate(89)-[ribosomal protein uS12]-hydrogen + (sulfur carrier)-SH + AH2 + 2 S-adenosyl-L-methionine = 3-methylsulfanyl-L-aspartate(89)-[ribosomal protein uS12]-hydrogen + (sulfur carrier)-H + 5'-deoxyadenosine + L-methionine + A + S-adenosyl-L-homocysteine + 2 H(+). Catalyzes the methylthiolation of an aspartic acid residue of ribosomal protein uS12. This is Ribosomal protein uS12 methylthiotransferase RimO from Clostridium kluyveri (strain ATCC 8527 / DSM 555 / NBRC 12016 / NCIMB 10680 / K1).